We begin with the raw amino-acid sequence, 302 residues long: 1D-myo-inositol 2-acetamido-2-deoxy-alpha-D-glucopyranoside deacetylase (302 aa).

The Zn(2+) site is built by His-12, Asp-15, and His-147.

Belongs to the MshB deacetylase family. The cofactor is Zn(2+).

The catalysed reaction is 1D-myo-inositol 2-acetamido-2-deoxy-alpha-D-glucopyranoside + H2O = 1D-myo-inositol 2-amino-2-deoxy-alpha-D-glucopyranoside + acetate. Catalyzes the deacetylation of 1D-myo-inositol 2-acetamido-2-deoxy-alpha-D-glucopyranoside (GlcNAc-Ins) in the mycothiol biosynthesis pathway. The polypeptide is 1D-myo-inositol 2-acetamido-2-deoxy-alpha-D-glucopyranoside deacetylase (Thermobispora bispora (strain ATCC 19993 / DSM 43833 / CBS 139.67 / JCM 10125 / KCTC 9307 / NBRC 14880 / R51)).